A 66-amino-acid chain; its full sequence is Sodium channel alpha-toxin Acra8 (66 aa).

In terms of domain architecture, LCN-type CS-alpha/beta spans 2 to 64; the sequence is RDGYIVDDKN…VPIKEKGRCN (63 aa). Intrachain disulfides connect C12–C63, C16–C36, C22–C46, and C26–C48. An Asparagine amide modification is found at N64. Residues 65–66 constitute a propeptide that is removed on maturation; the sequence is GR.

The protein belongs to the long (4 C-C) scorpion toxin superfamily. Sodium channel inhibitor family. Alpha subfamily. As to expression, expressed by the venom gland.

It is found in the secreted. In terms of biological role, alpha toxins bind voltage-independently at site-3 of sodium channels (Nav) and inhibit the inactivation of the activated channels, thereby blocking neuronal transmission. In Androctonus crassicauda (Arabian fat-tailed scorpion), this protein is Sodium channel alpha-toxin Acra8.